The chain runs to 292 residues: 4-hydroxy-tetrahydrodipicolinate synthase (292 aa).

Thr45 contributes to the pyruvate binding site. Tyr133 (proton donor/acceptor) is an active-site residue. Lys161 acts as the Schiff-base intermediate with substrate in catalysis. A pyruvate-binding site is contributed by Ile203.

This sequence belongs to the DapA family. In terms of assembly, homodimer.

It localises to the cytoplasm. The catalysed reaction is L-aspartate 4-semialdehyde + pyruvate = (2S,4S)-4-hydroxy-2,3,4,5-tetrahydrodipicolinate + H2O + H(+). It participates in amino-acid biosynthesis; L-lysine biosynthesis via DAP pathway; (S)-tetrahydrodipicolinate from L-aspartate: step 3/4. Its function is as follows. Catalyzes the condensation of (S)-aspartate-beta-semialdehyde [(S)-ASA] and pyruvate to 4-hydroxy-tetrahydrodipicolinate (HTPA). This is 4-hydroxy-tetrahydrodipicolinate synthase from Pseudomonas aeruginosa (strain ATCC 15692 / DSM 22644 / CIP 104116 / JCM 14847 / LMG 12228 / 1C / PRS 101 / PAO1).